Here is a 170-residue protein sequence, read N- to C-terminus: MENIILIGMPLSGKSTLGRELSKILKYDLIDTDTLIEEMEDKSIKEIFKIYGEDYFREKELKIINKLKKESNKVISTGGGLPIYNKNIYELKKIGFTVYLKVPLEELIKRMVKKEDDARPLLKNDDTKFLEEMYKNRIEIYEKAHTIICNTNYEESLIAIVKAYKKWKGI.

Residue 11 to 16 (LSGKST) participates in ATP binding. S15 lines the Mg(2+) pocket. Substrate-binding residues include D33, R57, and G79. An ATP-binding site is contributed by R119. R137 lines the substrate pocket.

This sequence belongs to the shikimate kinase family. Monomer. It depends on Mg(2+) as a cofactor.

The protein localises to the cytoplasm. The enzyme catalyses shikimate + ATP = 3-phosphoshikimate + ADP + H(+). It functions in the pathway metabolic intermediate biosynthesis; chorismate biosynthesis; chorismate from D-erythrose 4-phosphate and phosphoenolpyruvate: step 5/7. In terms of biological role, catalyzes the specific phosphorylation of the 3-hydroxyl group of shikimic acid using ATP as a cosubstrate. This Clostridium botulinum (strain Loch Maree / Type A3) protein is Shikimate kinase.